The primary structure comprises 275 residues: Calcium-binding protein 4 (275 aa).

A compositionally biased stretch (polar residues) spans 1-12 (MTTEQARGQQGP). Residues 1-112 (MTTEQARGQQ…SLHDAAQRTY (112 aa)) are disordered. Positions 38-55 (TRKRSKKERGLRGSRKRT) are enriched in basic residues. Ser-42 is modified (phosphoserine). EF-hand domains follow at residues 129-164 (EELD…LGYM), 183-200 (GRVD…KLRE), 206-241 (LGVR…LLGE), and 243-275 (LAGP…LSRH). Residues Asp-142, Asp-144, Asp-146, Tyr-148, and Glu-153 each contribute to the Ca(2+) site. 10 residues coordinate Ca(2+): Asp-219, Asp-221, Asp-223, Arg-225, Glu-230, Asp-256, Asn-258, Asp-260, Thr-262, and Glu-267.

As to quaternary structure, interacts with CACNA1F and CACNA1D (via IQ domain) in a calcium independent manner. Interacts (via N-terminus) with UNC119. Post-translationally, phosphorylated. Phosphorylation levels change with the light conditions and regulate the activity. In terms of tissue distribution, expressed in retina and in the inner hair cells (IHC) of the cochlea.

The protein localises to the cytoplasm. The protein resides in the presynapse. Involved in normal synaptic function through regulation of Ca(2+) influx and neurotransmitter release in photoreceptor synaptic terminals and in auditory transmission. Modulator of CACNA1D and CACNA1F, suppressing the calcium-dependent inactivation and shifting the activation range to more hyperpolarized voltages. The protein is Calcium-binding protein 4 (CABP4) of Homo sapiens (Human).